A 1210-amino-acid polypeptide reads, in one-letter code: Inner capsid protein VP3 (1210 aa).

A disordered region spans residues 1–28; it reads MPRTSRNVRATEVATTAIPPSNAATDTT. Residues 113 to 136 form a C2H2-type zinc finger; that stretch reads LRCQQCGAKFSSMTQLAEHVRTEH. Residues 294–319 are disordered; sequence PHAGPQVRSVQSQDQQVYSVDSGPDP. The span at 299-315 shows a compositional bias: low complexity; it reads QVRSVQSQDQQVYSVDS.

This sequence belongs to the turreted BTV-fold inner capsid family. In terms of assembly, homodecamer; each decamer is made up of two conformers of VP2, called VP2A and VP2B. 12 homodecamers assemble to form an icosahedral capsid. Interacts with VP6.

It localises to the virion. Functionally, inner capsid protein that self-assembles to form an icosahedral capsid with a T=2 symmetry, which consists of 120 copies of VP2, with channels at each of its five-fold vertices. This capsid constitutes the innermost concentric layer of the viral mature particle. This is Inner capsid protein VP3 (S3) from Aquareovirus A (isolate Chum salmon/Japan/CSRV/1981) (AQRV-A).